Here is a 213-residue protein sequence, read N- to C-terminus: Transmembrane emp24 domain-containing protein p24delta8 (213 aa).

The N-terminal stretch at 1-22 is a signal peptide; that stretch reads MDLCRSSILLLIIALLSPRTLS. The Lumenal segment spans residues 23 to 180; it reads MRYELKSSKT…QELNRSTNSK (158 aa). One can recognise a GOLD domain in the interval 32–148; the sequence is TKCIGEEIHE…VDMMEYQVKT (117 aa). A glycan (N-linked (GlcNAc...) asparagine) is linked at asparagine 97. Residues 163 to 176 are a coiled coil; the sequence is LREREEEMQELNRS. Arginine 166 bears the Omega-N-methylated arginine mark. An N-linked (GlcNAc...) asparagine glycan is attached at asparagine 174. A helical membrane pass occupies residues 181 to 203; that stretch reads MAWLSFGSLVVCLSVAGLQFWHL. The segment at 202–213 is interaction with ARF1; it reads HLKTFFEKKKLI. The Cytoplasmic portion of the chain corresponds to 204–213; sequence KTFFEKKKLI. The COPII vesicle coat-binding motif lies at 206–207; it reads FF. The short motif at 206-213 is the COPI vesicle coat-binding element; the sequence is FFEKKKLI.

This sequence belongs to the EMP24/GP25L family. As to quaternary structure, probably oligomerizes with other members of the EMP24/GP25L family. Associates with the COPI vesicle coat (coatomer). Associates with the COPII vesicle coat (coatomer). Interacts with ARF1 (GDP-bound).

The protein resides in the endoplasmic reticulum membrane. It is found in the golgi apparatus. Its subcellular location is the cis-Golgi network membrane. It localises to the golgi stack membrane. Involved in vesicular protein trafficking. Mainly functions in the early secretory pathway. Thought to act as cargo receptor at the lumenal side for incorporation of secretory cargo molecules into transport vesicles and to be involved in vesicle coat formation at the cytoplasmic side. On Golgi membranes, acts as a primary receptor for ARF1-GDP which is involved in COPI-vesicle formation. This is Transmembrane emp24 domain-containing protein p24delta8 from Arabidopsis thaliana (Mouse-ear cress).